The primary structure comprises 234 residues: Sugar fermentation stimulation protein homolog (234 aa).

It belongs to the SfsA family.

This is Sugar fermentation stimulation protein homolog from Shewanella baltica (strain OS195).